Consider the following 410-residue polypeptide: Multifunctional CCA protein (410 aa).

Residues Gly8 and Arg11 each coordinate ATP. Residues Gly8 and Arg11 each contribute to the CTP site. Glu21 and Asp23 together coordinate Mg(2+). Positions 91, 137, and 140 each coordinate ATP. CTP is bound by residues Arg91, Arg137, and Arg140. The region spanning 228-329 (TGIHSLMTLR…VKLLEQVDAF (102 aa)) is the HD domain.

It belongs to the tRNA nucleotidyltransferase/poly(A) polymerase family. Bacterial CCA-adding enzyme type 1 subfamily. In terms of assembly, monomer. Can also form homodimers and oligomers. Mg(2+) serves as cofactor. It depends on Ni(2+) as a cofactor.

It carries out the reaction a tRNA precursor + 2 CTP + ATP = a tRNA with a 3' CCA end + 3 diphosphate. It catalyses the reaction a tRNA with a 3' CCA end + 2 CTP + ATP = a tRNA with a 3' CCACCA end + 3 diphosphate. Its function is as follows. Catalyzes the addition and repair of the essential 3'-terminal CCA sequence in tRNAs without using a nucleic acid template. Adds these three nucleotides in the order of C, C, and A to the tRNA nucleotide-73, using CTP and ATP as substrates and producing inorganic pyrophosphate. tRNA 3'-terminal CCA addition is required both for tRNA processing and repair. Also involved in tRNA surveillance by mediating tandem CCA addition to generate a CCACCA at the 3' terminus of unstable tRNAs. While stable tRNAs receive only 3'-terminal CCA, unstable tRNAs are marked with CCACCA and rapidly degraded. This Legionella pneumophila subsp. pneumophila (strain Philadelphia 1 / ATCC 33152 / DSM 7513) protein is Multifunctional CCA protein.